The sequence spans 246 residues: Chalcone--flavanone isomerase 1 (246 aa).

Positions 59, 124, and 201 each coordinate substrate.

The protein belongs to the chalcone isomerase family. As to expression, mostly expressed in siliques and flowers, and, to a lower extent, in leaves.

The catalysed reaction is a chalcone = a flavanone.. It participates in secondary metabolite biosynthesis; flavonoid biosynthesis. Its function is as follows. Catalyzes the intramolecular cyclization of bicyclic chalcones into tricyclic (S)-flavanones. Responsible for the isomerization of 4,2',4',6'-tetrahydroxychalcone (also termed chalcone) into naringenin. The polypeptide is Chalcone--flavanone isomerase 1 (CHI1) (Arabidopsis thaliana (Mouse-ear cress)).